A 298-amino-acid chain; its full sequence is Transcription factor RHD6 (298 aa).

Disordered regions lie at residues Met1 to Gln58 and Thr157 to Arg213. The span at Ser15–Ser27 shows a compositional bias: low complexity. Composition is skewed to polar residues over residues Thr157 to Ser168 and Gly177 to Val190. Residues Thr191–Pro205 show a composition bias toward low complexity. Residues Ser201–Arg214 form a basic motif region. Positions Ser201–Leu250 constitute a bHLH domain. Residues Glu215–Leu250 are helix-loop-helix motif.

In terms of assembly, homodimer. Forms heterodimers with RSL1. Interacts with TIFY10B/JAZ2, TIFY6A/JAZ4, TIFY5A/JAZ8, TIFY7/JAZ9 and TIFY9/JAZ10. Expressed constitutively in flowers. Expressed in root epidermal hair cells.

It localises to the nucleus. Functionally, transcription factor that is specifically required for the development of root hairs. Acts with RSL1 to positively regulate root hair development. Acts downstream of genes that regulate epidermal pattern formation, such as GL2. Targets directly RSL4, another transcription factor involved in the regulation of root hair elongation. Acts with RSL1 as transcription factor that integrates a jasmonate (JA) signaling pathway that stimulates root hair growth. This is Transcription factor RHD6 from Arabidopsis thaliana (Mouse-ear cress).